A 307-amino-acid chain; its full sequence is Elongation factor Ts (307 aa).

The tract at residues 80-83 (TDFV) is involved in Mg(2+) ion dislocation from EF-Tu.

This sequence belongs to the EF-Ts family.

It is found in the cytoplasm. Its function is as follows. Associates with the EF-Tu.GDP complex and induces the exchange of GDP to GTP. It remains bound to the aminoacyl-tRNA.EF-Tu.GTP complex up to the GTP hydrolysis stage on the ribosome. The polypeptide is Elongation factor Ts (Clostridium botulinum (strain 657 / Type Ba4)).